The sequence spans 372 residues: Ciliary neurotrophic factor receptor subunit alpha (372 aa).

Positions 1–22 (MAASVPWACCAVLAAAAAAVYT) are cleaved as a signal peptide. Residues 27–104 (PQEAPHVQYE…WHLRHQVLLH (78 aa)) enclose the Ig-like C2-type domain. An intrachain disulfide couples C46 to C89. 4 N-linked (GlcNAc...) asparagine glycosylation sites follow: N60, N70, N142, and N190. 2 consecutive Fibronectin type-III domains span residues 108-205 (PPRE…VKPD) and 206-306 (PPEN…TEEP). The WSXWS motif motif lies at 290-294 (WSDWS). The segment at 301-338 (PWTEEPRHLTTEAQAPETTTSTTSSLAPPPTTKICDPG) is disordered. A compositionally biased stretch (low complexity) spans 311-326 (TEAQAPETTTSTTSSL). A lipid anchor (GPI-anchor amidated serine) is attached at S342. A propeptide spans 343–372 (GGGPSILFLTSVPVTLVLAAAAATANNLLI) (removed in mature form).

The protein belongs to the type I cytokine receptor family. Type 3 subfamily. As to quaternary structure, forms a heterotrimer with LIFR and IL6ST. Interacts with heterodimeric neurotropic cytokine composed of CLCF1/CLC and CRLF1/CLF-1. Either alone or in complex with the heterodimer CLCF1-CRLF1 interacts with SORL1; this interaction may promote internalization and lysosomal degradation.

It localises to the cell membrane. Functionally, binds to CNTF. The alpha subunit provides the receptor specificity. This is Ciliary neurotrophic factor receptor subunit alpha (Cntfr) from Mus musculus (Mouse).